The chain runs to 499 residues: Pentatricopeptide repeat-containing protein At5g61800 (499 aa).

10 PPR repeats span residues 78-113 (STFC…SVPP), 114-150 (DFHT…GLLS), 151-181 (DLFT…NPQR), 182-212 (DVVT…MPLR), 213-247 (DLVS…GLKP), 248-282 (DNVA…RLFI), 283-313 (DSFL…CSDK), 314-348 (TLFT…GIKP), 349-379 (DGVT…MRSL), and 385-419 (EMKH…GGNR). A type E motif region spans residues 424–499 (AWSGLLGGCR…KNVGFSKVLS (76 aa)).

The protein belongs to the PPR family. PCMP-E subfamily.

The chain is Pentatricopeptide repeat-containing protein At5g61800 (PCMP-E8) from Arabidopsis thaliana (Mouse-ear cress).